Reading from the N-terminus, the 337-residue chain is Phenylalanine--tRNA ligase alpha subunit (337 aa).

Glu252 provides a ligand contact to Mg(2+).

Belongs to the class-II aminoacyl-tRNA synthetase family. Phe-tRNA synthetase alpha subunit type 1 subfamily. As to quaternary structure, tetramer of two alpha and two beta subunits. Mg(2+) is required as a cofactor.

It localises to the cytoplasm. It carries out the reaction tRNA(Phe) + L-phenylalanine + ATP = L-phenylalanyl-tRNA(Phe) + AMP + diphosphate + H(+). In Francisella tularensis subsp. novicida (strain U112), this protein is Phenylalanine--tRNA ligase alpha subunit.